We begin with the raw amino-acid sequence, 201 residues long: Protease (201 aa).

Residues His55, Asp72, and Cys122 contribute to the active site.

Belongs to the peptidase C5 family. As to quaternary structure, interacts with protease cofactor pVI-C; this interaction is necessary for protease activation.

The protein localises to the virion. It localises to the host nucleus. The catalysed reaction is Cleaves proteins of the adenovirus and its host cell at two consensus sites: -Yaa-Xaa-Gly-Gly-|-Xaa- and -Yaa-Xaa-Gly-Xaa-|-Gly- (in which Yaa is Met, Ile or Leu, and Xaa is any amino acid).. Requires DNA and protease cofactor for maximal activation. Inside nascent virions, becomes partially activated by binding to the viral DNA, allowing it to cleave the cofactor that binds to the protease and fully activates it. Actin, like the viral protease cofactor, seems to act as a cofactor in the cleavage of cytokeratin 18 and of actin itself. Its function is as follows. Cleaves viral precursor proteins (pTP, pIIIa, pVI, pVII, pVIII, and pX) inside newly assembled particles giving rise to mature virions. Protease complexed to its cofactor slides along the viral DNA to specifically locate and cleave the viral precursors. Mature virions have a weakened organization compared to the unmature virions, thereby facilitating subsequent uncoating. Without maturation, the particle lacks infectivity and is unable to uncoat. Late in adenovirus infection, in the cytoplasm, may participate in the cytoskeleton destruction. Cleaves host cell cytoskeletal keratins K7 and K18. This is Protease from Pantherophis guttatus (Corn snake).